A 439-amino-acid chain; its full sequence is Guanine deaminase (439 aa).

Zn(2+)-binding residues include His-82 and His-84. Residues 84 to 87 (HYPQ), 209 to 210 (RF), 237 to 240 (HLCE), and Asp-327 each bind substrate. Residues His-237 and Asp-327 each coordinate Zn(2+).

Belongs to the metallo-dependent hydrolases superfamily. ATZ/TRZ family. Zn(2+) serves as cofactor.

It carries out the reaction guanine + H2O + H(+) = xanthine + NH4(+). It participates in purine metabolism; guanine degradation; xanthine from guanine: step 1/1. In terms of biological role, catalyzes the hydrolytic deamination of guanine, producing xanthine and ammonia. The protein is Guanine deaminase (guaD) of Escherichia coli (strain K12).